A 54-amino-acid chain; its full sequence is Small ribosomal subunit protein uS14 (54 aa).

Zn(2+) is bound by residues C19, C22, C37, and C40.

Belongs to the universal ribosomal protein uS14 family. Zinc-binding uS14 subfamily. Part of the 30S ribosomal subunit. Zn(2+) is required as a cofactor.

Binds 16S rRNA, required for the assembly of 30S particles. The polypeptide is Small ribosomal subunit protein uS14 (Aeropyrum pernix (strain ATCC 700893 / DSM 11879 / JCM 9820 / NBRC 100138 / K1)).